The chain runs to 388 residues: MFKATTSARHRPGQGNSLSTLMARYNNQGLQRYSLKDKEHKIRRRKRSWGFQHSVILKNSWALPLLLTIVLPVIYAIHPVESKFFGHFILLSYRHGSVTDGMAFPVAQYKKGLWDLAFVAFYANALFLARKFIMKRLLRPLALKNNVSTMGKQQRFMEQMYTACYFAVMGPFGLYVMKTTPGLWIFQTHGMYDSYPHRSLGPAIKFYYLLQAAYWVQQSVVLVLRLEKPRKDHMELTVHHIITITLIALSYRFHFTHIGISMYITHDISDLFLATSKSLNYLSHRLQTPAFCLCVIAWIYLRHYTNWRILYSVLTEFRTVGPFELDWEAEQYKCQLSQFITFGLLATLQTLNIIWLYCLLRNAYRLLFLRIAKDDRSDTDKSEIEHGD.

The next 2 helical transmembrane spans lie at 60 to 80 (SWALPLLLTIVLPVIYAIHPV) and 113 to 133 (LWDLAFVAFYANALFLARKFI). Residue Asn146 is glycosylated (N-linked (GlcNAc...) asparagine). The TLC domain occupies 151-368 (GKQQRFMEQM…LLRNAYRLLF (218 aa)). 4 helical membrane passes run 166-186 (FAVMGPFGLYVMKTTPGLWIF), 204-224 (IKFYYLLQAAYWVQQSVVLVL), 241-261 (IITITLIALSYRFHFTHIGIS), and 339-359 (FITFGLLATLQTLNIIWLYCL).

The protein belongs to the sphingosine N-acyltransferase family.

It is found in the endoplasmic reticulum membrane. It participates in mycotoxin biosynthesis. Functionally, sphingosine N-acyltransferase-like protein; part of the gene cluster that mediates the biosynthesis of fumonisins B1 (FB1), B2 (FB2), B3 (FB3), and B4 (FB4), which are carcinogenic mycotoxins. May contribute to the biosynthesis of ceramide via interaction with Cer3. Does not confer resistance to FB1. The biosynthesis starts with the FUM1-catalyzed carbon chain assembly from one molecule of acetyl-CoA, eight molecules of malonyl-CoA, and two molecules of methionine (in S-adenosyl form). The C18 polyketide chain is released from the enzyme by a nucleophilic attack of a carbanion, which is derived from R-carbon of alanine by decarboxylation, on the carbonyl carbon of polyketide acyl chain. This step is catalyzed by the pyridoxal 5'-phosphate-dependent aminoacyl transferase FUM8. The resultant 3-keto intermediate is then stereospecifically reduced to a 3-hydroxyl product by reductase FUM13. Subsequent oxidations at C-10 by the cytochrome P450 monooxygenase FUM2, C-14 and C-15 by FUM6, FUM12 or FUM15, tricarballylic esterification of the hydroxyl groups on C-14 and C-15 by acyltransferase FUM14, and C-5 hydroxylation by 2-keto-glutarate-dependent dioxygenase FUM3 furnish the biosynthesis of fumonisins. The tricarballylic moieties are most likely derived from the citric acid cycle, and their addition to the carbon backbone may involve FUM7, FUM10, FUM11 and FUM14. In Gibberella moniliformis (strain M3125 / FGSC 7600) (Maize ear and stalk rot fungus), this protein is Sphingosine N-acyltransferase-like protein FUM17.